Here is a 499-residue protein sequence, read N- to C-terminus: Glutamate--tRNA ligase (499 aa).

Positions 12-22 match the 'HIGH' region motif; it reads PSPTGHLHIGN. A 'KMSKS' region motif is present at residues 259-263; sequence KLSKR. Lysine 262 is a binding site for ATP.

This sequence belongs to the class-I aminoacyl-tRNA synthetase family. Glutamate--tRNA ligase type 1 subfamily. In terms of assembly, monomer.

It is found in the cytoplasm. The catalysed reaction is tRNA(Glu) + L-glutamate + ATP = L-glutamyl-tRNA(Glu) + AMP + diphosphate. Functionally, catalyzes the attachment of glutamate to tRNA(Glu) in a two-step reaction: glutamate is first activated by ATP to form Glu-AMP and then transferred to the acceptor end of tRNA(Glu). The protein is Glutamate--tRNA ligase of Lactobacillus acidophilus (strain ATCC 700396 / NCK56 / N2 / NCFM).